The sequence spans 33 residues: Ice-structuring protein GS-5 (33 aa).

Blocked amino end (Met) is present on Met1.

This sequence belongs to the type-I AFP family.

In terms of biological role, antifreeze proteins lower the blood freezing point. This chain is Ice-structuring protein GS-5, found in Myoxocephalus aenaeus (Grubby sculpin).